A 369-amino-acid polypeptide reads, in one-letter code: S-(hydroxymethyl)glutathione dehydrogenase (369 aa).

The Zn(2+) site is built by C40, H62, C92, C95, C98, C106, and C169.

This sequence belongs to the zinc-containing alcohol dehydrogenase family. Class-III subfamily. Homodimer. Zn(2+) is required as a cofactor.

It localises to the cytoplasm. The catalysed reaction is S-(hydroxymethyl)glutathione + NADP(+) = S-formylglutathione + NADPH + H(+). The enzyme catalyses S-(hydroxymethyl)glutathione + NAD(+) = S-formylglutathione + NADH + H(+). It carries out the reaction a primary alcohol + NAD(+) = an aldehyde + NADH + H(+). It catalyses the reaction a secondary alcohol + NAD(+) = a ketone + NADH + H(+). The catalysed reaction is S-nitrosoglutathione + NADH + H(+) = S-(hydroxysulfenamide)glutathione + NAD(+). Has high formaldehyde dehydrogenase activity in the presence of glutathione and catalyzes the oxidation of normal alcohols in a reaction that is not GSH-dependent. In addition, hemithiolacetals other than those formed from GSH, including omega-thiol fatty acids, also are substrates. Also acts as a S-nitroso-glutathione reductase by catalyzing the NADH-dependent reduction of S-nitrosoglutathione. In Synechocystis sp. (strain ATCC 27184 / PCC 6803 / Kazusa), this protein is S-(hydroxymethyl)glutathione dehydrogenase (frmA).